We begin with the raw amino-acid sequence, 94 residues long: uncharacterized protein (94 aa).

The N-terminal stretch at 1–22 (MIMKNCLLLGALLMGFTGVAMA) is a signal peptide.

This is an uncharacterized protein from Escherichia coli (strain K12).